A 722-amino-acid chain; its full sequence is Inactive serine protease PAMR1 (722 aa).

Positions 1–21 (MALLVWSSLVVASLHLLGTAA) are cleaved as a signal peptide. An N-linked (GlcNAc...) asparagine glycan is attached at Asn-98. 8 disulfide bridges follow: Cys-130–Cys-152, Cys-179–Cys-201, Cys-241–Cys-252, Cys-246–Cys-262, Cys-264–Cys-273, Cys-282–Cys-331, Cys-317–Cys-344, and Cys-416–Cys-444. Residues 130 to 238 (CGEVIQAARG…DGFYVTFEEV (109 aa)) form the CUB domain. The EGF-like domain maps to 237-274 (EVTGCSSTPCFHDGTCIADKTGSYRCACLAGYTGRHCE). 2 consecutive Sushi domains span residues 280–346 (KSCK…VCIK) and 393–446 (KPAL…SCIP). The N-linked (GlcNAc...) asparagine glycan is linked to Asn-318. The Peptidase S1 domain occupies 447-722 (ICGKLENFNI…FKEWLEKNMK (276 aa)). N-linked (GlcNAc...) asparagine glycosylation occurs at Asn-455. Cysteines 491 and 507 form a disulfide. N-linked (GlcNAc...) asparagine glycosylation occurs at Asn-616. Cystine bridges form between Cys-632–Cys-651 and Cys-663–Cys-699.

It belongs to the peptidase S1 family.

Its subcellular location is the secreted. Functionally, may play a role in regeneration of skeletal muscle. This is Inactive serine protease PAMR1 (pamr1) from Xenopus tropicalis (Western clawed frog).